The chain runs to 349 residues: Phenylalanine--tRNA ligase alpha subunit (349 aa).

E259 is a binding site for Mg(2+).

The protein belongs to the class-II aminoacyl-tRNA synthetase family. Phe-tRNA synthetase alpha subunit type 1 subfamily. In terms of assembly, tetramer of two alpha and two beta subunits. Requires Mg(2+) as cofactor.

It localises to the cytoplasm. It carries out the reaction tRNA(Phe) + L-phenylalanine + ATP = L-phenylalanyl-tRNA(Phe) + AMP + diphosphate + H(+). This Lactobacillus delbrueckii subsp. bulgaricus (strain ATCC 11842 / DSM 20081 / BCRC 10696 / JCM 1002 / NBRC 13953 / NCIMB 11778 / NCTC 12712 / WDCM 00102 / Lb 14) protein is Phenylalanine--tRNA ligase alpha subunit.